The chain runs to 1298 residues: DNA-directed RNA polymerase subunit beta' (1298 aa).

Positions 60, 62, 75, and 78 each coordinate Zn(2+). 3 residues coordinate Mg(2+): D535, D537, and D539. Zn(2+) is bound by residues C877, C954, C961, and C964.

The protein belongs to the RNA polymerase beta' chain family. In terms of assembly, the RNAP catalytic core consists of 2 alpha, 1 beta, 1 beta' and 1 omega subunit. When a sigma factor is associated with the core the holoenzyme is formed, which can initiate transcription. It depends on Mg(2+) as a cofactor. The cofactor is Zn(2+).

The enzyme catalyses RNA(n) + a ribonucleoside 5'-triphosphate = RNA(n+1) + diphosphate. DNA-dependent RNA polymerase catalyzes the transcription of DNA into RNA using the four ribonucleoside triphosphates as substrates. In Micrococcus luteus (strain ATCC 4698 / DSM 20030 / JCM 1464 / CCM 169 / CCUG 5858 / IAM 1056 / NBRC 3333 / NCIMB 9278 / NCTC 2665 / VKM Ac-2230) (Micrococcus lysodeikticus), this protein is DNA-directed RNA polymerase subunit beta'.